Consider the following 217-residue polypeptide: uncharacterized protein (217 aa).

The signal sequence occupies residues 1–32 (MPITKATPLFLRYRLKGFVFLTLLLVQGVFTA). Cysteine 33 is lipidated: N-palmitoyl cysteine. Cysteine 33 is lipidated: S-diacylglycerol cysteine.

It belongs to the MG067/MG068/MG395 family.

It is found in the cell membrane. This is an uncharacterized protein from Mycoplasma pneumoniae (strain ATCC 29342 / M129 / Subtype 1) (Mycoplasmoides pneumoniae).